Reading from the N-terminus, the 187-residue chain is uncharacterized protein (187 aa).

A coiled-coil region spans residues 127-172 (KQPQVTLTQLQEELDEAKTRLALKEKELLEALSEISKLRLQLSNQL).

This is an uncharacterized protein from Tomato torrado virus (isolate Solanum lycopersicum/Spain/PRIToTV0301/-) (ToTV).